Consider the following 1202-residue polypeptide: Nucleolar protein 6 (1202 aa).

A disordered region spans residues 1–64 (MNKTKRKQQS…KKYKDNETNK (64 aa)).

Belongs to the NRAP family. In terms of assembly, part of the small subunit (SSU) processome, composed of more than 70 proteins and the RNA chaperone small nucleolar RNA (snoRNA) U3.

It is found in the nucleus. The protein localises to the nucleolus. Its subcellular location is the chromosome. Its function is as follows. Part of the small subunit (SSU) processome, first precursor of the small eukaryotic ribosomal subunit. During the assembly of the SSU processome in the nucleolus, many ribosome biogenesis factors, an RNA chaperone and ribosomal proteins associate with the nascent pre-rRNA and work in concert to generate RNA folding, modifications, rearrangements and cleavage as well as targeted degradation of pre-ribosomal RNA by the RNA exosome. In Drosophila willistoni (Fruit fly), this protein is Nucleolar protein 6.